Consider the following 312-residue polypeptide: tRNA-cytidine(32) 2-sulfurtransferase (312 aa).

The short motif at 48–53 (SGGKDS) is the PP-loop motif element. C123, C126, and C214 together coordinate [4Fe-4S] cluster.

Belongs to the TtcA family. As to quaternary structure, homodimer. Mg(2+) serves as cofactor. Requires [4Fe-4S] cluster as cofactor.

It is found in the cytoplasm. The catalysed reaction is cytidine(32) in tRNA + S-sulfanyl-L-cysteinyl-[cysteine desulfurase] + AH2 + ATP = 2-thiocytidine(32) in tRNA + L-cysteinyl-[cysteine desulfurase] + A + AMP + diphosphate + H(+). Its pathway is tRNA modification. Its function is as follows. Catalyzes the ATP-dependent 2-thiolation of cytidine in position 32 of tRNA, to form 2-thiocytidine (s(2)C32). The sulfur atoms are provided by the cysteine/cysteine desulfurase (IscS) system. This chain is tRNA-cytidine(32) 2-sulfurtransferase, found in Mannheimia succiniciproducens (strain KCTC 0769BP / MBEL55E).